The sequence spans 285 residues: Acetyl-coenzyme A carboxylase carboxyl transferase subunit beta (285 aa).

One can recognise a CoA carboxyltransferase N-terminal domain in the interval 22-285 (LWTKCEACGA…HPGVAYAPGV (264 aa)). Residues cysteine 26, cysteine 29, cysteine 45, and cysteine 48 each coordinate Zn(2+). Residues 26–48 (CEACGAQIYKKEFQENLHVCPKC) form a C4-type zinc finger.

Belongs to the AccD/PCCB family. In terms of assembly, acetyl-CoA carboxylase is a heterohexamer composed of biotin carboxyl carrier protein (AccB), biotin carboxylase (AccC) and two subunits each of ACCase subunit alpha (AccA) and ACCase subunit beta (AccD). It depends on Zn(2+) as a cofactor.

The protein localises to the cytoplasm. It catalyses the reaction N(6)-carboxybiotinyl-L-lysyl-[protein] + acetyl-CoA = N(6)-biotinyl-L-lysyl-[protein] + malonyl-CoA. It participates in lipid metabolism; malonyl-CoA biosynthesis; malonyl-CoA from acetyl-CoA: step 1/1. In terms of biological role, component of the acetyl coenzyme A carboxylase (ACC) complex. Biotin carboxylase (BC) catalyzes the carboxylation of biotin on its carrier protein (BCCP) and then the CO(2) group is transferred by the transcarboxylase to acetyl-CoA to form malonyl-CoA. In Thermus thermophilus (strain ATCC 27634 / DSM 579 / HB8), this protein is Acetyl-coenzyme A carboxylase carboxyl transferase subunit beta.